Here is a 400-residue protein sequence, read N- to C-terminus: Succinate--glutarate CoA-transferase (400 aa).

The active-site Nucleophile is the Asp-181.

It belongs to the CoA-transferase III family.

It catalyses the reaction glutarate + succinyl-CoA = glutaryl-CoA + succinate. Its pathway is amino-acid degradation. It participates in cofactor biosynthesis; biotin biosynthesis. Functionally, is involved in L-lysine degradation and provides glutaryl-CoA for biotin synthesis. Catalyzes the conversion of glutarate to glutaryl-CoA via the transfer of CoA from succinyl-CoA. This chain is Succinate--glutarate CoA-transferase, found in Agrobacterium fabrum (strain C58 / ATCC 33970) (Agrobacterium tumefaciens (strain C58)).